Reading from the N-terminus, the 421-residue chain is Probable tRNA N6-adenosine threonylcarbamoyltransferase, mitochondrial (421 aa).

A mitochondrion-targeting transit peptide spans 1-22 (MNIPKILNNNLVLKRIFCRNYS). 2 residues coordinate a divalent metal cation: His133 and His137. Substrate is bound by residues 156–160 (LLSGG), Asp189, Gly208, Glu212, 308–309 (AN), and Thr336. Position 337 (Asp337) interacts with a divalent metal cation.

Belongs to the KAE1 / TsaD family. Homodimer. Requires a divalent metal cation as cofactor.

The protein resides in the mitochondrion. The enzyme catalyses L-threonylcarbamoyladenylate + adenosine(37) in tRNA = N(6)-L-threonylcarbamoyladenosine(37) in tRNA + AMP + H(+). Functionally, required for the formation of a threonylcarbamoyl group on adenosine at position 37 (t(6)A37) in mitochondrial tRNAs that read codons beginning with adenine. Probably involved in the transfer of the threonylcarbamoyl moiety of threonylcarbamoyl-AMP (TC-AMP) to the N6 group of A37. Involved in mitochondrial genome maintenance. This chain is Probable tRNA N6-adenosine threonylcarbamoyltransferase, mitochondrial, found in Caenorhabditis elegans.